Consider the following 87-residue polypeptide: Defensin-like protein 175 (87 aa).

Residues 1-23 (MAKATSSLVVPIIFLVIFALVEQ) form the signal peptide. Cystine bridges form between Cys27–Cys66, Cys36–Cys55, Cys39–Cys60, and Cys43–Cys62.

Belongs to the DEFL family.

The protein resides in the secreted. The chain is Defensin-like protein 175 from Arabidopsis thaliana (Mouse-ear cress).